A 308-amino-acid chain; its full sequence is Aspartate carbamoyltransferase catalytic subunit (308 aa).

Arginine 57 and threonine 58 together coordinate carbamoyl phosphate. Lysine 86 is a binding site for L-aspartate. Carbamoyl phosphate contacts are provided by arginine 107, histidine 135, and glutamine 138. L-aspartate is bound by residues arginine 168 and arginine 229. Carbamoyl phosphate is bound by residues leucine 268 and proline 269.

This sequence belongs to the aspartate/ornithine carbamoyltransferase superfamily. ATCase family. As to quaternary structure, heterooligomer of catalytic and regulatory chains.

It carries out the reaction carbamoyl phosphate + L-aspartate = N-carbamoyl-L-aspartate + phosphate + H(+). It functions in the pathway pyrimidine metabolism; UMP biosynthesis via de novo pathway; (S)-dihydroorotate from bicarbonate: step 2/3. Functionally, catalyzes the condensation of carbamoyl phosphate and aspartate to form carbamoyl aspartate and inorganic phosphate, the committed step in the de novo pyrimidine nucleotide biosynthesis pathway. This chain is Aspartate carbamoyltransferase catalytic subunit, found in Pyrococcus horikoshii (strain ATCC 700860 / DSM 12428 / JCM 9974 / NBRC 100139 / OT-3).